The primary structure comprises 185 residues: Elongation factor P (185 aa).

It belongs to the elongation factor P family.

It localises to the cytoplasm. Its pathway is protein biosynthesis; polypeptide chain elongation. In terms of biological role, involved in peptide bond synthesis. Stimulates efficient translation and peptide-bond synthesis on native or reconstituted 70S ribosomes in vitro. Probably functions indirectly by altering the affinity of the ribosome for aminoacyl-tRNA, thus increasing their reactivity as acceptors for peptidyl transferase. The protein is Elongation factor P of Paraburkholderia phytofirmans (strain DSM 17436 / LMG 22146 / PsJN) (Burkholderia phytofirmans).